A 299-amino-acid chain; its full sequence is Capsid protein (299 aa).

A disordered region spans residues 1-46 (MPPKVAPESSDAVSSQEQPQRPPPATPPVPTPPPGRREEVGDRAED). A compositionally biased stretch (pro residues) spans 20 to 34 (QRPPPATPPVPTPPP). Over residues 35–46 (GRREEVGDRAED) the composition is skewed to basic and acidic residues.

It belongs to the potexviruses coat protein family.

The protein localises to the virion. In terms of biological role, required for genome encapsidation. Forms ribonucleoprotein complexes along with TGB1 helicase and viral RNA. The chain is Capsid protein from Helenium virus S (HelVS).